Reading from the N-terminus, the 168-residue chain is Putative peroxiredoxin prxA (168 aa).

The Thioredoxin domain occupies Leu-4–Phe-158. Catalysis depends on Cys-61, which acts as the Cysteine sulfenic acid (-SOH) intermediate.

This sequence belongs to the peroxiredoxin family. Prx5 subfamily. As to quaternary structure, homodimer; disulfide-linked, upon oxidation. Interacts with thioredoxin trxA.

The enzyme catalyses a hydroperoxide + [thioredoxin]-dithiol = an alcohol + [thioredoxin]-disulfide + H2O. Its function is as follows. Thiol-specific peroxidase that catalyzes the reduction of hydrogen peroxide and organic hydroperoxides to water and alcohols, respectively. Plays a role in cell protection against oxidative stress by detoxifying peroxides and as sensor of hydrogen peroxide-mediated signaling events. Involved in osmoadaptation. The sequence is that of Putative peroxiredoxin prxA from Emericella nidulans (strain FGSC A4 / ATCC 38163 / CBS 112.46 / NRRL 194 / M139) (Aspergillus nidulans).